The following is a 110-amino-acid chain: Snake venom vascular endothelial growth factor toxin HF (110 aa).

At Gln-1 the chain carries Pyrrolidone carboxylic acid. Intrachain disulfides connect Cys-14/Cys-56, Cys-45/Cys-91, and Cys-49/Cys-93.

Belongs to the PDGF/VEGF growth factor family. Snake venom VEGF subfamily. In terms of assembly, homodimer; disulfide-linked. Interacts with VEGF receptor-2 (KDR) with high affinity. In terms of tissue distribution, expressed by the venom gland.

The protein localises to the secreted. In terms of biological role, snake venom VEGFs that may contribute to venom dispersion and prey subjugation by inducing vascular permeability and hypotension. This protein induces an increase in capillary permeability after intradermal injection, as well as a drastic hypotensive effect after intravenous injection. The hypotension is mediated by nitric oxide (NO), which is produced by VEGF-activated endothelium NO synthase. Also induces angiogenesis in vitro, probably through VEGF receptor (KDR/VEGFR-2) signaling. This chain is Snake venom vascular endothelial growth factor toxin HF, found in Vipera aspis aspis (Aspic viper).